The sequence spans 180 residues: NADH-quinone oxidoreductase subunit I (180 aa).

4Fe-4S ferredoxin-type domains follow at residues 46 to 80 (GRIV…LQKT) and 90 to 119 (EFFR…LTPD). [4Fe-4S] cluster is bound by residues cysteine 60, cysteine 63, cysteine 66, cysteine 70, cysteine 99, cysteine 102, cysteine 105, and cysteine 109.

Belongs to the complex I 23 kDa subunit family. As to quaternary structure, NDH-1 is composed of 14 different subunits. Subunits NuoA, H, J, K, L, M, N constitute the membrane sector of the complex. [4Fe-4S] cluster serves as cofactor.

The protein localises to the cell membrane. It catalyses the reaction a quinone + NADH + 5 H(+)(in) = a quinol + NAD(+) + 4 H(+)(out). Its function is as follows. NDH-1 shuttles electrons from NADH, via FMN and iron-sulfur (Fe-S) centers, to quinones in the respiratory chain. The immediate electron acceptor for the enzyme in this species is believed to be ubiquinone. Couples the redox reaction to proton translocation (for every two electrons transferred, four hydrogen ions are translocated across the cytoplasmic membrane), and thus conserves the redox energy in a proton gradient. The protein is NADH-quinone oxidoreductase subunit I of Baumannia cicadellinicola subsp. Homalodisca coagulata.